The chain runs to 30 residues: Cyclotide cycloviolacin O17 (30 aa).

The cyclopeptide (Gly-Asn) cross-link spans 1-30; the sequence is GIPCGESCVWIPCISAAIGCSCKNKVCYRN. 3 disulfides stabilise this stretch: Cys4–Cys20, Cys8–Cys22, and Cys13–Cys27.

Post-translationally, this is a cyclic peptide.

Its function is as follows. Probably participates in a plant defense mechanism. This is Cyclotide cycloviolacin O17 from Psychotria brachyceras.